Here is an 828-residue protein sequence, read N- to C-terminus: Periplasmic nitrate reductase (828 aa).

A signal peptide (tat-type signal) is located at residues 1–31; sequence MKLSRRSFMKANAVAAAAAAAGLSVPGVARA. Positions 39–95 constitute a 4Fe-4S Mo/W bis-MGD-type domain; that stretch reads IKWDKAPCRFCGTGCGVLVGTQQGRVVACQGDPDAPVNRGLNCIKGYFLPKIMYGKD. Positions 46, 49, 53, and 81 each coordinate [4Fe-4S] cluster. Mo-bis(molybdopterin guanine dinucleotide) is bound by residues Lys83, Gln150, Asn175, Cys179, 212-219, 243-247, 262-264, Met372, Gln376, Asn482, 508-509, Lys531, Asp558, and 718-727; these read WGANMAEM, STYQH, QSD, SD, and TGRVLEHWHT. Phe794 contributes to the substrate binding site. Mo-bis(molybdopterin guanine dinucleotide)-binding residues include Asn802 and Lys819.

Belongs to the prokaryotic molybdopterin-containing oxidoreductase family. NasA/NapA/NarB subfamily. As to quaternary structure, component of the periplasmic nitrate reductase NapAB complex composed of NapA and NapB. [4Fe-4S] cluster serves as cofactor. The cofactor is Mo-bis(molybdopterin guanine dinucleotide). Post-translationally, predicted to be exported by the Tat system. The position of the signal peptide cleavage has not been experimentally proven.

Its subcellular location is the periplasm. It catalyses the reaction 2 Fe(II)-[cytochrome] + nitrate + 2 H(+) = 2 Fe(III)-[cytochrome] + nitrite + H2O. Functionally, catalytic subunit of the periplasmic nitrate reductase complex NapAB. Receives electrons from NapB and catalyzes the reduction of nitrate to nitrite. This is Periplasmic nitrate reductase from Escherichia coli (strain K12 / MC4100 / BW2952).